A 225-amino-acid chain; its full sequence is tRNA (guanine-N(1)-)-methyltransferase (225 aa).

Residues G112 and 132 to 137 each bind S-adenosyl-L-methionine; that span reads IGDYVL.

This sequence belongs to the RNA methyltransferase TrmD family. As to quaternary structure, homodimer.

It is found in the cytoplasm. The enzyme catalyses guanosine(37) in tRNA + S-adenosyl-L-methionine = N(1)-methylguanosine(37) in tRNA + S-adenosyl-L-homocysteine + H(+). Functionally, specifically methylates guanosine-37 in various tRNAs. The sequence is that of tRNA (guanine-N(1)-)-methyltransferase from Porphyromonas gingivalis (strain ATCC BAA-308 / W83).